A 189-amino-acid polypeptide reads, in one-letter code: Protein GrpE (189 aa).

Over residues 1–10 the composition is skewed to polar residues; that stretch reads MADEQQQTLD. Positions 1-21 are disordered; that stretch reads MADEQQQTLDPQAPEQTDAPE.

This sequence belongs to the GrpE family. As to quaternary structure, homodimer.

The protein resides in the cytoplasm. Its function is as follows. Participates actively in the response to hyperosmotic and heat shock by preventing the aggregation of stress-denatured proteins, in association with DnaK and GrpE. It is the nucleotide exchange factor for DnaK and may function as a thermosensor. Unfolded proteins bind initially to DnaJ; upon interaction with the DnaJ-bound protein, DnaK hydrolyzes its bound ATP, resulting in the formation of a stable complex. GrpE releases ADP from DnaK; ATP binding to DnaK triggers the release of the substrate protein, thus completing the reaction cycle. Several rounds of ATP-dependent interactions between DnaJ, DnaK and GrpE are required for fully efficient folding. The polypeptide is Protein GrpE (Pseudomonas paraeruginosa (strain DSM 24068 / PA7) (Pseudomonas aeruginosa (strain PA7))).